Reading from the N-terminus, the 61-residue chain is Conotoxin LiC32 (61 aa).

Positions 1 to 22 (MRCVPVFIILLLLSPSAPSVDA) are cleaved as a signal peptide. Residues 23 to 44 (HPKTKDDVPLASFHDDAKRTLQ) constitute a propeptide that is removed on maturation. Position 60 is a cysteine amide (Cys60).

The protein belongs to the conotoxin T superfamily. Contains 2 disulfide bonds that can be either 'C1-C3, C2-C4' or 'C1-C4, C2-C3', since these disulfide connectivities have been observed for conotoxins with cysteine framework V (for examples, see AC P0DQQ7 and AC P81755). Expressed by the venom duct.

Its subcellular location is the secreted. Functionally, has the ability to interact with the G-protein coupled somatostatin type 3 receptor (SSTR3). The ability was measured in competition binding experiments and the constant of inhibition (Ki) has been evaluated to be 3.5 uM. This is Conotoxin LiC32 from Conus lividus (Livid cone).